The following is a 158-amino-acid chain: MGQFTVVSLGLLAVFLSLSGAKGDNCPANWISRNGVCNKLFPDRKTWLEAEMYCRALKPGCHLASLHRDSDSTVLAWYISDHFKGAGHVWIGLRDTNRKRTWKWSDRTSTNYFSWNQGEPNNVQDNENCVHLWAPSGYLKWNDEPCASLHPFICQYKL.

The N-terminal stretch at 1–23 is a signal peptide; that stretch reads MGQFTVVSLGLLAVFLSLSGAKG. 3 cysteine pairs are disulfide-bonded: Cys26–Cys37, Cys54–Cys154, and Cys129–Cys146. A C-type lectin domain is found at 33–155; it reads RNGVCNKLFP…CASLHPFICQ (123 aa). A Mannose-binding motif is present at residues 119-121; it reads EPN. Ca(2+) contacts are provided by Glu127, Asn142, and Asp143.

The protein belongs to the true venom lectin family. In terms of tissue distribution, expressed by the venom gland.

The protein localises to the secreted. Mannose-binding lectin which recognizes specific carbohydrate structures and agglutinates a variety of animal cells by binding to cell-surface glycoproteins and glycolipids. May be a calcium-dependent lectin. The sequence is that of C-type lectin lectoxin-Enh5 from Pseudoferania polylepis (Macleay's water snake).